The following is a 471-amino-acid chain: Exoglucanase 2 (471 aa).

Positions 1-18 (MIVGILTTLATLATLAAS) are cleaved as a signal peptide. Residues 19–24 (VPLEER) constitute a propeptide that is removed on maturation. Gln-25 bears the Pyrrolidone carboxylic acid mark. The 37-residue stretch at 26–62 (ACSSVWGQCGGQNWSGPTCCASGSTCVYSNDYYSQCL) folds into the CBM1 domain. A compositionally biased stretch (low complexity) spans 64–101 (GAASSSSSTRAASTTSRVSPTTSRSSSATPPPGSTTTR). The tract at residues 64–108 (GAASSSSSTRAASTTSRVSPTTSRSSSATPPPGSTTTRVPPVGSG) is disordered. The segment at 66–106 (ASSSSSTRAASTTSRVSPTTSRSSSATPPPGSTTTRVPPVG) is linker. A catalytic region spans residues 107 to 471 (SGTATYSGNP…LLTNANPSFL (365 aa)). 2 O-linked (Man...) threonine glycosylation sites follow: Thr-111 and Thr-121. O-linked (Man...) serine glycosylation is found at Ser-130, Ser-133, Ser-134, and Ser-139. An O-linked (Man...) threonine glycan is attached at Thr-146. Cys-200 and Cys-259 are oxidised to a cystine. Asp-245 acts as the Proton donor in catalysis. A glycan (N-linked (GlcNAc) asparagine) is linked at Asn-313. Asn-334 carries N-linked (GlcNAc...) (high mannose) asparagine glycosylation. A disulfide bond links Cys-392 and Cys-439.

Belongs to the glycosyl hydrolase 6 (cellulase B) family. Post-translationally, asn-334 contains mainly a high-mannose-type glycan (Hex(7-9)GlcNAc(2)) in a 3:1 ration with a single GlcNAc. Asn-313 was primarily unglycosylated with a small fraction (18%) bearing a single GlcNAc at this site.

The protein resides in the secreted. It carries out the reaction Hydrolysis of (1-&gt;4)-beta-D-glucosidic linkages in cellulose and cellotetraose, releasing cellobiose from the non-reducing ends of the chains.. Functionally, exocellobiohydrolases (CBH) that catalyzes the hydrolysis of 1,4-beta-D-glucosidic bonds in cellulose to release the disaccharide cellobiose. The degradation of cellulose involves an interplay between different cellulolytic enzymes. Hydrolysis starts with endoglucanases (EGs), which cut internal beta-1,4-glucosidic bonds in cellulose to reduce the polymerization degree of the substrate and create new chain ends for exocellobiohydrolases (CBHs). The CBHs release the disaccharide cellobiose from the non-reducing end of the cellulose polymer chain. Finally, beta-1,4-glucosidases hydrolyze the cellobiose and other short cello-oligosaccharides into glucose units. The chain is Exoglucanase 2 (cbh2) from Hypocrea jecorina (Trichoderma reesei).